The primary structure comprises 311 residues: MKIVFMGTPDFAAEHLRKLVEKKYNVVGVFSQPDKPKGRGKKLIPTPVKQVAREYGIPVFQPKSVNKGEGFEALKELKPDIIITVAYGKLLKQQVFELPPLGCYNVHASLLPKYRGAAPIQRALENGEKETGITIFKIDEGMDSGPIALQERIEISSDDNFGTLKKKLCNLGKKLLIEFLKKISAGEIKLTPQDHSQATYAPKITKEDTILIEFDNGERVFNKIRAYDPEPGVTTRLGELRVKLFGAGICDNCCVDAEPGQIISISKDSMVVACKKGAVKISKIQFPGKKVITVWQAKSGRLIEEGIKLGG.

Ser-109–Pro-112 contributes to the (6S)-5,6,7,8-tetrahydrofolate binding site.

The protein belongs to the Fmt family.

The catalysed reaction is L-methionyl-tRNA(fMet) + (6R)-10-formyltetrahydrofolate = N-formyl-L-methionyl-tRNA(fMet) + (6S)-5,6,7,8-tetrahydrofolate + H(+). Its function is as follows. Attaches a formyl group to the free amino group of methionyl-tRNA(fMet). The formyl group appears to play a dual role in the initiator identity of N-formylmethionyl-tRNA by promoting its recognition by IF2 and preventing the misappropriation of this tRNA by the elongation apparatus. This is Methionyl-tRNA formyltransferase from Kosmotoga olearia (strain ATCC BAA-1733 / DSM 21960 / TBF 19.5.1).